The sequence spans 715 residues: Polyribonucleotide nucleotidyltransferase (715 aa).

Aspartate 498 and aspartate 504 together coordinate Mg(2+). Residues 565-625 (PKVCMMQIKP…ETVKKTVAFI (61 aa)) form the KH domain. The region spanning 635 to 709 (GTCYQASILR…RIDFLLLPKK (75 aa)) is the S1 motif domain.

Belongs to the polyribonucleotide nucleotidyltransferase family. Requires Mg(2+) as cofactor.

The protein localises to the cytoplasm. The enzyme catalyses RNA(n+1) + phosphate = RNA(n) + a ribonucleoside 5'-diphosphate. Involved in mRNA degradation. Catalyzes the phosphorolysis of single-stranded polyribonucleotides processively in the 3'- to 5'-direction. This Aster yellows witches'-broom phytoplasma (strain AYWB) protein is Polyribonucleotide nucleotidyltransferase.